Reading from the N-terminus, the 165-residue chain is Ribosomal RNA large subunit methyltransferase H (165 aa).

Gly109 serves as a coordination point for S-adenosyl-L-methionine.

The protein belongs to the RNA methyltransferase RlmH family. In terms of assembly, homodimer.

Its subcellular location is the cytoplasm. It catalyses the reaction pseudouridine(1915) in 23S rRNA + S-adenosyl-L-methionine = N(3)-methylpseudouridine(1915) in 23S rRNA + S-adenosyl-L-homocysteine + H(+). Specifically methylates the pseudouridine at position 1915 (m3Psi1915) in 23S rRNA. This Methylorubrum extorquens (strain CM4 / NCIMB 13688) (Methylobacterium extorquens) protein is Ribosomal RNA large subunit methyltransferase H.